Here is a 329-residue protein sequence, read N- to C-terminus: 7,8-didemethyl-8-hydroxy-5-deazariboflavin synthase (329 aa).

The 239-residue stretch at 6-244 folds into the Radical SAM core domain; that stretch reads ITYTKNVFLP…EEISIQVAPN (239 aa). Residues cysteine 20, cysteine 24, and cysteine 27 each contribute to the [4Fe-4S] cluster site.

Belongs to the radical SAM superfamily. CofG family. As to quaternary structure, consists of two subunits, CofG and CofH. The cofactor is [4Fe-4S] cluster.

It catalyses the reaction 5-amino-5-(4-hydroxybenzyl)-6-(D-ribitylimino)-5,6-dihydrouracil + S-adenosyl-L-methionine = 7,8-didemethyl-8-hydroxy-5-deazariboflavin + 5'-deoxyadenosine + L-methionine + NH4(+) + H(+). It functions in the pathway cofactor biosynthesis; coenzyme F0 biosynthesis. Catalyzes the radical-mediated synthesis of 7,8-didemethyl-8-hydroxy-5-deazariboflavin from 5-amino-5-(4-hydroxybenzyl)-6-(D-ribitylimino)-5,6-dihydrouracil. The chain is 7,8-didemethyl-8-hydroxy-5-deazariboflavin synthase from Methanoregula boonei (strain DSM 21154 / JCM 14090 / 6A8).